The following is a 221-amino-acid chain: Casparian strip membrane protein 3 (221 aa).

Over residues 1–12 the composition is skewed to basic and acidic residues; sequence MDIEKAASRREE. Residues 1–28 form a disordered region; sequence MDIEKAASRREEEEPIVQRPKLDKGKGK. The Cytoplasmic portion of the chain corresponds to 1-58; it reads MDIEKAASRREEEEPIVQRPKLDKGKGKAHVFAPPMNYNRIMDKHKQEKVSAAGWKRG. The chain crosses the membrane as a helical span at residues 59-79; the sequence is VAIFDFVLRLIAAITAMAAAA. The Extracellular segment spans residues 80-109; the sequence is KMATTEETLPFFTQFLQFQAEYTDLPTMSS. Residues 110–130 form a helical membrane-spanning segment; it reads FVIVNSIVGGYLTLSLPFSIV. Over 131–148 the chain is Cytoplasmic; that stretch reads CILRPLAVPPRLFLIICD. A helical transmembrane segment spans residues 149-169; the sequence is TAMMGLTMMAASASAAIVYLA. At 170 to 194 the chain is on the extracellular side; that stretch reads HNGNSSSNWLPVCQQFGDFCQGTSG. N173 carries N-linked (GlcNAc...) asparagine glycosylation. A helical membrane pass occupies residues 195 to 215; that stretch reads AVVASFIAATLLMFLVILSAF. Topologically, residues 216-221 are cytoplasmic; sequence ALKRST.

The protein belongs to the Casparian strip membrane proteins (CASP) family. As to quaternary structure, homodimer and heterodimers.

It is found in the cell membrane. Regulates membrane-cell wall junctions and localized cell wall deposition. Required for establishment of the Casparian strip membrane domain (CSD) and the subsequent formation of Casparian strips, a cell wall modification of the root endodermis that determines an apoplastic barrier between the intraorganismal apoplasm and the extraorganismal apoplasm and prevents lateral diffusion. This is Casparian strip membrane protein 3 from Arabidopsis lyrata subsp. lyrata (Lyre-leaved rock-cress).